Consider the following 166-residue polypeptide: Phosphopantetheine adenylyltransferase (166 aa).

Residue S11 participates in substrate binding. ATP is bound by residues 11-12 (SF) and H19. K43, A76, and R90 together coordinate substrate. ATP-binding positions include 91–93 (GLR), E101, and 126–132 (MQPISSS).

It belongs to the bacterial CoaD family. As to quaternary structure, homohexamer. Mg(2+) is required as a cofactor.

The protein resides in the cytoplasm. The catalysed reaction is (R)-4'-phosphopantetheine + ATP + H(+) = 3'-dephospho-CoA + diphosphate. The protein operates within cofactor biosynthesis; coenzyme A biosynthesis; CoA from (R)-pantothenate: step 4/5. Reversibly transfers an adenylyl group from ATP to 4'-phosphopantetheine, yielding dephospho-CoA (dPCoA) and pyrophosphate. The chain is Phosphopantetheine adenylyltransferase from Streptococcus uberis (strain ATCC BAA-854 / 0140J).